The chain runs to 369 residues: Isopentenyl-diphosphate delta-isomerase (369 aa).

9-10 is a substrate binding site; that stretch reads RK. FMN is bound by residues Thr-65, 66–68, Ser-96, and Asn-125; that span reads GMT. Position 96–98 (96–98) interacts with substrate; that stretch reads SQR. Gln-160 provides a ligand contact to substrate. Mg(2+) is bound at residue Glu-161. FMN-binding positions include Lys-193, Ser-218, Thr-223, 275 to 277, and 296 to 297; these read GVR and AL.

It belongs to the IPP isomerase type 2 family. In terms of assembly, homooctamer. Dimer of tetramers. Requires FMN as cofactor. It depends on NADPH as a cofactor. Mg(2+) serves as cofactor.

Its subcellular location is the cytoplasm. It catalyses the reaction isopentenyl diphosphate = dimethylallyl diphosphate. Its function is as follows. Involved in the biosynthesis of isoprenoids. Catalyzes the 1,3-allylic rearrangement of the homoallylic substrate isopentenyl (IPP) to its allylic isomer, dimethylallyl diphosphate (DMAPP). The protein is Isopentenyl-diphosphate delta-isomerase of Sulfurisphaera tokodaii (strain DSM 16993 / JCM 10545 / NBRC 100140 / 7) (Sulfolobus tokodaii).